The sequence spans 183 residues: Adenine phosphoribosyltransferase (183 aa).

This sequence belongs to the purine/pyrimidine phosphoribosyltransferase family. Homodimer.

The protein resides in the cytoplasm. The catalysed reaction is AMP + diphosphate = 5-phospho-alpha-D-ribose 1-diphosphate + adenine. It participates in purine metabolism; AMP biosynthesis via salvage pathway; AMP from adenine: step 1/1. Functionally, catalyzes a salvage reaction resulting in the formation of AMP, that is energically less costly than de novo synthesis. In Escherichia coli O157:H7, this protein is Adenine phosphoribosyltransferase.